The following is a 261-amino-acid chain: Indole-3-glycerol phosphate synthase (261 aa).

It belongs to the TrpC family.

It carries out the reaction 1-(2-carboxyphenylamino)-1-deoxy-D-ribulose 5-phosphate + H(+) = (1S,2R)-1-C-(indol-3-yl)glycerol 3-phosphate + CO2 + H2O. It participates in amino-acid biosynthesis; L-tryptophan biosynthesis; L-tryptophan from chorismate: step 4/5. This chain is Indole-3-glycerol phosphate synthase, found in Burkholderia pseudomallei (strain 668).